The sequence spans 283 residues: Bifunctional protein FolD (283 aa).

Residues 164–166, S189, and I230 each bind NADP(+); that span reads GRS.

It belongs to the tetrahydrofolate dehydrogenase/cyclohydrolase family. As to quaternary structure, homodimer.

The catalysed reaction is (6R)-5,10-methylene-5,6,7,8-tetrahydrofolate + NADP(+) = (6R)-5,10-methenyltetrahydrofolate + NADPH. It catalyses the reaction (6R)-5,10-methenyltetrahydrofolate + H2O = (6R)-10-formyltetrahydrofolate + H(+). It participates in one-carbon metabolism; tetrahydrofolate interconversion. Catalyzes the oxidation of 5,10-methylenetetrahydrofolate to 5,10-methenyltetrahydrofolate and then the hydrolysis of 5,10-methenyltetrahydrofolate to 10-formyltetrahydrofolate. The sequence is that of Bifunctional protein FolD from Lacticaseibacillus paracasei (strain ATCC 334 / BCRC 17002 / CCUG 31169 / CIP 107868 / KCTC 3260 / NRRL B-441) (Lactobacillus paracasei).